The chain runs to 123 residues: Cliotide T12 (123 aa).

The N-terminal stretch at 1-28 (MASLRIAPLALFFFLAASVMFTVEKTEA) is a signal peptide. Positions 29-58 (GIPCGESCVFIPCITGAIGCSCKSKVCYRD) form a cross-link, cyclopeptide (Gly-Asp). 3 disulfide bridges follow: Cys-32–Cys-48, Cys-36–Cys-50, and Cys-41–Cys-55. Positions 59 to 123 (HVIAAEAKTM…KDHLKMSVPN (65 aa)) are cleaved as a propeptide — removed in mature form.

Contains 3 disulfide bonds. In terms of processing, this is a cyclic peptide.

Probably participates in a plant defense mechanism. The chain is Cliotide T12 from Clitoria ternatea (Butterfly pea).